A 269-amino-acid chain; its full sequence is Homocitrate synthase subunit alpha (269 aa).

A Pyruvate carboxyltransferase domain is found at isoleucine 3–isoleucine 255.

The protein belongs to the alpha-IPM synthase/homocitrate synthase family. In terms of assembly, heterodimer of an alpha and an omega chain.

The catalysed reaction is acetyl-CoA + 2-oxoglutarate + H2O = (2R)-homocitrate + CoA + H(+). This protein is a Fe-Mo-cofactor biosynthetic component. This chain is Homocitrate synthase subunit alpha (nifV-ALPHA), found in Clostridium pasteurianum.